A 303-amino-acid polypeptide reads, in one-letter code: N-acetylmuramic acid 6-phosphate etherase (303 aa).

Residues 1 to 21 form a disordered region; the sequence is MQPSQLRSLTTESRNPNTMGI. Residues 58 to 221 enclose the SIS domain; it reads AYDSISNGGR…STSVMIRQGK (164 aa). The active-site Proton donor is Glu86. The active site involves Glu117.

This sequence belongs to the GCKR-like family. MurNAc-6-P etherase subfamily. As to quaternary structure, homodimer.

It catalyses the reaction N-acetyl-D-muramate 6-phosphate + H2O = N-acetyl-D-glucosamine 6-phosphate + (R)-lactate. It participates in amino-sugar metabolism; N-acetylmuramate degradation. Its function is as follows. Specifically catalyzes the cleavage of the D-lactyl ether substituent of MurNAc 6-phosphate, producing GlcNAc 6-phosphate and D-lactate. In Bacillus pumilus (strain SAFR-032), this protein is N-acetylmuramic acid 6-phosphate etherase.